The primary structure comprises 338 residues: Solute carrier family 35 member G4 (338 aa).

A disordered region spans residues 1-29 (MAGSHPYFNLPDSTHPSPPSTPPSLHWHQ). A run of 7 helical transmembrane segments spans residues 37–57 (TNGL…VGPL), 160–180 (CGLL…LWTL), 190–210 (GLGY…LLVY), 221–241 (TVAF…LFVL), 250–270 (LLSW…FTCV), 281–301 (LVCA…YFML), and 305–325 (VAPS…IITA). An EamA 1 domain is found at 49-174 (LPAGFVGPLS…SILGLIIIVG (126 aa)). Positions 272–325 (YAVTKAHPALVCAVLHSEVVMALILQYFMLHETVAPSDIMGAGVVLGSIAIITA) constitute an EamA 2 domain.

It belongs to the SLC35G solute transporter family.

It is found in the membrane. The chain is Solute carrier family 35 member G4 (SLC35G4) from Homo sapiens (Human).